We begin with the raw amino-acid sequence, 304 residues long: Bifunctional protein FolD (304 aa).

NADP(+)-binding positions include 167–169, serine 192, and isoleucine 233; that span reads GRS.

It belongs to the tetrahydrofolate dehydrogenase/cyclohydrolase family. In terms of assembly, homodimer.

The enzyme catalyses (6R)-5,10-methylene-5,6,7,8-tetrahydrofolate + NADP(+) = (6R)-5,10-methenyltetrahydrofolate + NADPH. It carries out the reaction (6R)-5,10-methenyltetrahydrofolate + H2O = (6R)-10-formyltetrahydrofolate + H(+). It functions in the pathway one-carbon metabolism; tetrahydrofolate interconversion. Catalyzes the oxidation of 5,10-methylenetetrahydrofolate to 5,10-methenyltetrahydrofolate and then the hydrolysis of 5,10-methenyltetrahydrofolate to 10-formyltetrahydrofolate. In Rhodospirillum centenum (strain ATCC 51521 / SW), this protein is Bifunctional protein FolD.